A 789-amino-acid polypeptide reads, in one-letter code: MTLENRSTCLMTCQSSLLPKKPRFLSQKMWAPHLVVAYLIFVTLALALPGTQTRFSQEPADQTVVAGHRAVLPCVLLNYSGIVQWTKDGLALGMGQGLKAWPRYRVVGSADAGQYNLEITDAELSDDASYECQATEAALRSRRAKLTVLIPPEDTRIDGGPVILLQAGTPYNLTCRAFNAKPAATIIWFRDGTQQEGAVTSTELLKDGKRETTISQLLIQPTDLDIGRVFTCRSMNEAIPNGKETSIELDVHHPPTVTLSIEPQTVLEGERVIFTCQATANPEILGYRWAKGGFLIEDAHESRYETNVDYSFFTEPVSCEVYNKVGSTNVSTLVNVHFAPRIVVYPKPTTTDIGSDVTLTCVWVGNPPLTLTWTKKDSNMVLSNSNQLLLKSVTQADAGTYTCRAIVPRIGVAEREVPLYVNGPPIISSEAVQFAVRGDGGKVECFIGSTPPPDRIAWAWKENFLEVGTLERYTVERTNSGSGVLSTLTINNVMEADFQTHYNCTAWNSFGPGTAIIQLEEREVLPVGIIAGATIGAGILLVFSFAALVFFLYRRRKGSRKDVTLRKLDIKVETVNREPLTMHSDREDDTTSISTATRVMKAIYSSFKDDVDLKQDLHCDTIETREEYEMKDPTNGYYNVRAHEDRPSSRAVLYADYRAPGPTRFDGRPSSRLSHSSGYAQLNTYSRAPASDYGTEPTPSGPSAPGGTDTTSQLSYENYEKFNSHPFPGAAGYPTYRLGYPQAPPSGLERTPYEAYDPIGKYATATRFSYTSQHSDYGQRFQQRMQTHV.

The N-terminal stretch at 1-47 (MTLENRSTCLMTCQSSLLPKKPRFLSQKMWAPHLVVAYLIFVTLALA) is a signal peptide. Asn5, Asn78, and Asn172 each carry an N-linked (GlcNAc...) asparagine glycan. At 48–531 (LPGTQTRFSQ…REVLPVGIIA (484 aa)) the chain is on the extracellular side. Ig-like C2-type domains lie at 49 to 147 (PGTQ…AKLT), 152 to 248 (PEDT…TSIE), 255 to 335 (PTVT…TLVN), 340 to 419 (PRIV…EVPL), and 424 to 520 (PPII…IQLE). Cys74 and Cys132 form a disulfide bridge. 2 disulfides stabilise this stretch: Cys175–Cys232 and Cys276–Cys319. Asn329 carries N-linked (GlcNAc...) asparagine glycosylation. The cysteines at positions 361 and 403 are disulfide-linked. Residues 437-439 (RGD) carry the Cell attachment site motif. Residues Cys445 and Cys504 are joined by a disulfide bond. Asn503 carries N-linked (GlcNAc...) asparagine glycosylation. A helical membrane pass occupies residues 532–552 (GATIGAGILLVFSFAALVFFL). Topologically, residues 553 to 789 (YRRRKGSRKD…RFQQRMQTHV (237 aa)) are cytoplasmic. Ser606 is subject to Phosphoserine. A phosphotyrosine; by FYN mark is found at Tyr637 and Tyr638. A phosphotyrosine mark is found at Tyr654 and Tyr657. The disordered stretch occupies residues 687 to 713 (RAPASDYGTEPTPSGPSAPGGTDTTSQ). Over residues 694 to 712 (GTEPTPSGPSAPGGTDTTS) the composition is skewed to low complexity. Position 756 is a phosphotyrosine (Tyr756).

It belongs to the immunoglobulin superfamily. As to quaternary structure, interacts with TJP1/ZO-1 and with NPHS2/podocin (via the C-terminus). Interacts with NPHS1/nephrin (via the Ig-like domains); this interaction is dependent on KIRREL1 glycosylation. Homodimer (via the Ig-like domains). Interacts when tyrosine-phosphorylated with GRB2. In terms of processing, phosphorylation probably regulates the interaction with NPHS2. Phosphorylated at Tyr-637 and Tyr-638 by FYN, leading to GRB2 binding. Post-translationally, N-glycosylated.

Its subcellular location is the cell membrane. Required for proper function of the glomerular filtration barrier. It is involved in the maintenance of a stable podocyte architecture with interdigitating foot processes connected by specialized cell-cell junctions, known as the slit diaphragm. It is a signaling protein that needs the presence of TEC kinases to fully trans-activate the transcription factor AP-1. In Rattus norvegicus (Rat), this protein is Kin of IRRE-like protein 1 (Kirrel1).